The sequence spans 582 residues: Methionine--tRNA ligase (582 aa).

Residues 24–34 (PYIYAVPHLGN) carry the 'HIGH' region motif. Zn(2+)-binding residues include C156, C159, C169, and C172. Positions 346–350 (KFSKS) match the 'KMSKS' region motif. K349 contacts ATP.

The protein belongs to the class-I aminoacyl-tRNA synthetase family. MetG type 1 subfamily. Requires Zn(2+) as cofactor.

It is found in the cytoplasm. It carries out the reaction tRNA(Met) + L-methionine + ATP = L-methionyl-tRNA(Met) + AMP + diphosphate. Is required not only for elongation of protein synthesis but also for the initiation of all mRNA translation through initiator tRNA(fMet) aminoacylation. The polypeptide is Methionine--tRNA ligase (Caldivirga maquilingensis (strain ATCC 700844 / DSM 13496 / JCM 10307 / IC-167)).